Consider the following 144-residue polypeptide: Endoribonuclease YbeY (144 aa).

3 residues coordinate Zn(2+): H104, H108, and H114.

It belongs to the endoribonuclease YbeY family. The cofactor is Zn(2+).

Its subcellular location is the cytoplasm. Its function is as follows. Single strand-specific metallo-endoribonuclease involved in late-stage 70S ribosome quality control and in maturation of the 3' terminus of the 16S rRNA. This chain is Endoribonuclease YbeY, found in Nitratiruptor sp. (strain SB155-2).